A 366-amino-acid chain; its full sequence is Polyprenyl transferase ausN (366 aa).

8 helical membrane-spanning segments follow: residues 97 to 117 (VVGI…DLLL), 121 to 141 (LLLT…NDLI), 164 to 184 (LPTA…LFLF), 215 to 235 (LILV…GVEP), 239 to 259 (ILSS…IDLV), 287 to 307 (LAYS…LLGG), 308 to 328 (LRAP…WTFL), and 346 to 366 (SCLM…AVRV).

It belongs to the UbiA prenyltransferase family. Mg(2+) serves as cofactor.

It localises to the membrane. It carries out the reaction 3,5-dimethylorsellinate + (2E,6E)-farnesyl diphosphate = (3R)-3-farnesyl-6-hydroxy-2,3,5-trimethyl-4-oxocyclohexa-1,5-diene-1-carboxylate + diphosphate + H(+). The protein operates within secondary metabolite biosynthesis; terpenoid biosynthesis. Functionally, polyprenyl transferase; part of the gene cluster that mediates the biosynthesis of calidodehydroaustin, a fungal meroterpenoid. The first step of the pathway is the synthesis of 3,5-dimethylorsellinic acid by the polyketide synthase ausA. 3,5-dimethylorsellinic acid is then prenylated by the polyprenyl transferase ausN. Further epoxidation by the FAD-dependent monooxygenase ausM and cyclization by the probable terpene cyclase ausL lead to the formation of protoaustinoid A. Protoaustinoid A is then oxidized to spiro-lactone preaustinoid A3 by the combined action of the FAD-binding monooxygenases ausB and ausC, and the dioxygenase ausE. Acid-catalyzed keto-rearrangement and ring contraction of the tetraketide portion of preaustinoid A3 by ausJ lead to the formation of preaustinoid A4. The aldo-keto reductase ausK, with the help of ausH, is involved in the next step by transforming preaustinoid A4 into isoaustinone which is in turn hydroxylated by the P450 monooxygenase ausI to form austinolide. The cytochrome P450 monooxygenase ausG modifies austinolide to austinol. Austinol is further acetylated to austin by the O-acetyltransferase ausP, which spontaneously changes to dehydroaustin. The cytochrome P450 monooxygenase ausR then converts dehydroaustin is into 7-dehydrodehydroaustin. The hydroxylation catalyzed by ausR permits the O-acetyltransferase ausQ to add an additional acetyl group to the molecule, leading to the formation of acetoxydehydroaustin. The short chain dehydrogenase ausT catalyzes the reduction of the double bond present between carbon atoms 1 and 2 to convert 7-dehydrodehydroaustin into 1,2-dihydro-7-hydroxydehydroaustin. AusQ catalyzes not only an acetylation reaction but also the addition of the PKS ausV diketide product to 1,2-dihydro-7-hydroxydehydroaustin, forming precalidodehydroaustin. Finally, the iron/alpha-ketoglutarate-dependent dioxygenase converts precalidodehydroaustin into calidodehydroaustin. This is Polyprenyl transferase ausN from Aspergillus calidoustus.